We begin with the raw amino-acid sequence, 74 residues long: Small cysteine-rich protein 8 (74 aa).

The N-terminal stretch at 1-21 (MAAKFHLCLLLIILGTITVQG) is a signal peptide. A propeptide spanning residues 22-31 (ARHPGKPHFF) is cleaved from the precursor.

Belongs to the Cnidaria small cysteine-rich protein (SCRiP) family. beta subfamily. Contains 4 disulfide bonds.

The protein localises to the secreted. It is found in the nematocyst. Functionally, induces neurotoxic symptoms on zebrafish. Has also been claimed to be implied in calcification, but tests on homolog proteins suggest that proteins of this family have a neurotoxic function and not a calcification function. The sequence is that of Small cysteine-rich protein 8 from Orbicella faveolata (Mountainous star coral).